A 262-amino-acid polypeptide reads, in one-letter code: Thioredoxin-like protein HCF164, chloroplastic (262 aa).

A chloroplast-targeting transit peptide spans Met1–Pro54. The segment at Ser47–Pro90 is disordered. Positions Pro64–Glu76 are enriched in basic and acidic residues. Over residues Ser78 to Phe89 the composition is skewed to polar residues. One can recognise a Thioredoxin domain in the interval Ser78–Ser230. Catalysis depends on nucleophile residues Cys151 and Cys154. Residues Cys151 and Cys154 are joined by a disulfide bond.

Belongs to the thioredoxin family.

It is found in the plastid. It localises to the chloroplast. In terms of biological role, probable thiol-disulfide oxidoreductase that may participate in various redox reactions in the chloroplast. In Oryza sativa subsp. japonica (Rice), this protein is Thioredoxin-like protein HCF164, chloroplastic.